The primary structure comprises 871 residues: DNA mismatch repair protein MutS (871 aa).

618 to 625 (GPNMSGKS) provides a ligand contact to ATP.

This sequence belongs to the DNA mismatch repair MutS family.

In terms of biological role, this protein is involved in the repair of mismatches in DNA. It is possible that it carries out the mismatch recognition step. This protein has a weak ATPase activity. The sequence is that of DNA mismatch repair protein MutS from Christiangramia forsetii (strain DSM 17595 / CGMCC 1.15422 / KT0803) (Gramella forsetii).